The sequence spans 226 residues: NAD(P)H-quinone oxidoreductase subunit K, chloroplastic (226 aa).

[4Fe-4S] cluster-binding residues include Cys-43, Cys-44, Cys-108, and Cys-139.

It belongs to the complex I 20 kDa subunit family. In terms of assembly, NDH is composed of at least 16 different subunits, 5 of which are encoded in the nucleus. [4Fe-4S] cluster serves as cofactor.

It is found in the plastid. The protein resides in the chloroplast thylakoid membrane. The enzyme catalyses a plastoquinone + NADH + (n+1) H(+)(in) = a plastoquinol + NAD(+) + n H(+)(out). The catalysed reaction is a plastoquinone + NADPH + (n+1) H(+)(in) = a plastoquinol + NADP(+) + n H(+)(out). Functionally, NDH shuttles electrons from NAD(P)H:plastoquinone, via FMN and iron-sulfur (Fe-S) centers, to quinones in the photosynthetic chain and possibly in a chloroplast respiratory chain. The immediate electron acceptor for the enzyme in this species is believed to be plastoquinone. Couples the redox reaction to proton translocation, and thus conserves the redox energy in a proton gradient. This Lupinus luteus (European yellow lupine) protein is NAD(P)H-quinone oxidoreductase subunit K, chloroplastic.